Reading from the N-terminus, the 540-residue chain is Lysosomal cobalamin transport escort protein LMBD1 (540 aa).

At 1–10 (MATPGAASAE) the chain is on the extracellular side. Residues 11-31 (LVIGWCIFGLLLLAILAFCWI) traverse the membrane as a helical segment. At 32 to 50 (YVRKYQSRRESEVVSTITA) the chain is on the cytoplasmic side. A helical membrane pass occupies residues 51–71 (IFSLAIALITSALLPVDIFLV). Residues 72 to 100 (SYMKNQNGTFKDWANANVSRQIEDTVLYG) lie on the Extracellular side of the membrane. N-linked (GlcNAc...) asparagine glycans are attached at residues Asn-78 and Asn-88. A helical membrane pass occupies residues 101 to 121 (YYTLYSVILFCVFFWIPFVYF). Over 122 to 144 (YYEEKDDDDTSKCTQIKTALKYT) the chain is Cytoplasmic. Residues 145–165 (LGFVVICALLLLVGAFVPLNV) traverse the membrane as a helical segment. The Extracellular segment spans residues 166 to 188 (PNNKNSTEWEKVKFLFEELGSSH). A glycan (N-linked (GlcNAc...) asparagine) is linked at Asn-170. Residues 189–209 (GLAALSFSISSLTLIGMLAAI) form a helical membrane-spanning segment. The Cytoplasmic segment spans residues 210 to 305 (TYTAYGMSAL…KFCGALRPLK (96 aa)). The short motif at 232–235 (YERL) is the YERL motif; mediates interaction with adapter protein complex 2 and is essential for its function in clathrin-mediated endocytosis of INSR element. At Thr-238 the chain carries Phosphothreonine. The short motif at 294 to 297 (WTKF) is the WTKF motif; mediates interaction with adapter protein complex 2 and is essential for its function in clathrin-mediated endocytosis of INSR element. The helical transmembrane segment at 306-326 (IIWGIFFILVALLFVISLFLS) threads the bilayer. Residues 327-364 (NLDKALHSAGIDSGFIIFGANLSNPLNMLLPLLQTVFP) are Extracellular-facing. The N-linked (GlcNAc...) asparagine glycan is linked to Asn-347. The helical transmembrane segment at 365-385 (LDYILITIIIMYFIFTSMAGI) threads the bilayer. Residues 386-408 (RNIGIWFFWIRLYKIRRGRTRPQ) are Cytoplasmic-facing. Residues 409–429 (ALLFLCMILLLIVLHTSYMIY) form a helical membrane-spanning segment. Residues 430-486 (SLAPQYVMYGSQNYLIETNITSDNHKGNSTLSVPKRCDADAPEDQCTVTRTYLFLHK) lie on the Extracellular side of the membrane. N-linked (GlcNAc...) asparagine glycans are attached at residues Asn-448 and Asn-457. A helical transmembrane segment spans residues 487 to 507 (FWFFSAAYYFGNWAFLGVFLI). At 508–540 (GLIVSCCKGKKSVIEGVDEDSDISDDEPSVYSV) the chain is on the cytoplasmic side. Phosphoserine is present on residues Ser-528 and Ser-531.

Belongs to the LIMR family. LMBRD1 subfamily. Interacts with ABCD4; this interaction induces the translocation of ABCD4 from the endoplasmic reticulum to the lysosome. Interacts with ABCD4 and MMACHC; this interaction ensures the transport of cobalamin from the lysosome to the cytoplasm. Interacts with INSR, adapter protein complex 2 and clathrin heavy chain. Post-translationally, N-glycosylated.

The protein localises to the lysosome membrane. It localises to the cell membrane. It is found in the cytoplasmic vesicle. The protein resides in the clathrin-coated vesicle. Lysosomal membrane chaperone required to export cobalamin (vitamin B12) from lysosome to the cytosol, allowing its conversion to cofactors. Targets ABCD4 transporter from the endoplasmic reticulum to the lysosomal membrane. Then forms a complex with lysosomal transporter ABCD4 and cytoplasmic MMACHC to transport cobalamin across the lysosomal membrane. Acts as an adapter protein which plays an important role in mediating and regulating the internalization of the insulin receptor (INSR). Involved in clathrin-mediated endocytosis of INSR via its interaction with adapter protein complex 2. Essential for the initiation of gastrulation and early formation of mesoderm structures during embryogenesis. The polypeptide is Lysosomal cobalamin transport escort protein LMBD1 (LMBRD1) (Macaca fascicularis (Crab-eating macaque)).